Consider the following 397-residue polypeptide: Succinyl-diaminopimelate desuccinylase (397 aa).

Position 73 (H73) interacts with Zn(2+). D75 is an active-site residue. A Zn(2+)-binding site is contributed by D106. Catalysis depends on E140, which acts as the Proton acceptor. Residues E141, E169, and H366 each coordinate Zn(2+).

Belongs to the peptidase M20A family. DapE subfamily. Homodimer. Zn(2+) is required as a cofactor. Requires Co(2+) as cofactor.

The catalysed reaction is N-succinyl-(2S,6S)-2,6-diaminopimelate + H2O = (2S,6S)-2,6-diaminopimelate + succinate. It functions in the pathway amino-acid biosynthesis; L-lysine biosynthesis via DAP pathway; LL-2,6-diaminopimelate from (S)-tetrahydrodipicolinate (succinylase route): step 3/3. In terms of biological role, catalyzes the hydrolysis of N-succinyl-L,L-diaminopimelic acid (SDAP), forming succinate and LL-2,6-diaminopimelate (DAP), an intermediate involved in the bacterial biosynthesis of lysine and meso-diaminopimelic acid, an essential component of bacterial cell walls. The protein is Succinyl-diaminopimelate desuccinylase of Rhizobium johnstonii (strain DSM 114642 / LMG 32736 / 3841) (Rhizobium leguminosarum bv. viciae).